The sequence spans 108 residues: Large ribosomal subunit protein uL24 (108 aa).

Belongs to the universal ribosomal protein uL24 family. As to quaternary structure, part of the 50S ribosomal subunit.

Its function is as follows. One of two assembly initiator proteins, it binds directly to the 5'-end of the 23S rRNA, where it nucleates assembly of the 50S subunit. Functionally, one of the proteins that surrounds the polypeptide exit tunnel on the outside of the subunit. This is Large ribosomal subunit protein uL24 from Moorella thermoacetica (strain ATCC 39073 / JCM 9320).